The chain runs to 365 residues: Putative DNA-directed RNA polymerase subunit alpha-like 3 (365 aa).

It belongs to the RNA polymerase alpha chain family. As to quaternary structure, in plastids the minimal PEP RNA polymerase catalytic core is composed of four subunits: alpha, beta, beta', and beta''. When a (nuclear-encoded) sigma factor is associated with the core the holoenzyme is formed, which can initiate transcription.

It localises to the plastid. It is found in the chloroplast. It catalyses the reaction RNA(n) + a ribonucleoside 5'-triphosphate = RNA(n+1) + diphosphate. In terms of biological role, DNA-dependent RNA polymerase catalyzes the transcription of DNA into RNA using the four ribonucleoside triphosphates as substrates. The chain is Putative DNA-directed RNA polymerase subunit alpha-like 3 (rpoAL3-A) from Pelargonium hortorum (Common geranium).